Consider the following 592-residue polypeptide: V-type ATP synthase alpha chain (592 aa).

232-239 (GPFGSGKT) serves as a coordination point for ATP.

The protein belongs to the ATPase alpha/beta chains family.

It carries out the reaction ATP + H2O + 4 H(+)(in) = ADP + phosphate + 5 H(+)(out). Its function is as follows. Produces ATP from ADP in the presence of a proton gradient across the membrane. The V-type alpha chain is a catalytic subunit. This chain is V-type ATP synthase alpha chain, found in Clostridioides difficile (strain 630) (Peptoclostridium difficile).